Reading from the N-terminus, the 286-residue chain is Glycine--tRNA ligase alpha subunit (286 aa).

This sequence belongs to the class-II aminoacyl-tRNA synthetase family. Tetramer of two alpha and two beta subunits.

The protein resides in the cytoplasm. It catalyses the reaction tRNA(Gly) + glycine + ATP = glycyl-tRNA(Gly) + AMP + diphosphate. In Thermotoga neapolitana (strain ATCC 49049 / DSM 4359 / NBRC 107923 / NS-E), this protein is Glycine--tRNA ligase alpha subunit.